The primary structure comprises 620 residues: Glutathione-regulated potassium-efflux system protein KefC (620 aa).

Residues 1 to 3 lie on the Periplasmic side of the membrane; that stretch reads MDS. The helical transmembrane segment at 4–24 threads the bilayer; the sequence is HTLLQALIYLGSAALIVPIAV. Position 25 (arginine 25) is a topological domain, cytoplasmic. The chain crosses the membrane as a helical span at residues 26–46; it reads LGLGSVLGYLIAGCIIGPWGL. Over 47 to 53 the chain is Periplasmic; sequence RLVTDAE. The helical transmembrane segment at 54–74 threads the bilayer; it reads SILHFAEIGVVLMLFVIGLEL. Topologically, residues 75 to 89 are cytoplasmic; the sequence is DPQRLWKLRASVFGG. The chain crosses the membrane as a helical span at residues 90-110; the sequence is GALQMVVCGGLIGLFCMFLGL. Over 111 to 113 the chain is Periplasmic; that stretch reads RWQ. Residues 114 to 134 form a helical membrane-spanning segment; sequence VAELIGMTLALSSTAIAMQAM. The Cytoplasmic portion of the chain corresponds to 135-148; that stretch reads NERNLTVSQVGRSA. Residues 149–169 traverse the membrane as a helical segment; the sequence is FAVLLFQDIAAIPLVAMIPLL. The Periplasmic segment spans residues 170-177; it reads AASGASTT. The chain crosses the membrane as a helical span at residues 178–198; that stretch reads LGAFALSALKVAGALALVVLL. The Cytoplasmic portion of the chain corresponds to 199–213; the sequence is GRYVTRPALRFVARS. Residues 214–233 traverse the membrane as a helical segment; sequence GLREVFSAVALFLVFGFGLL. Topologically, residues 234-236 are periplasmic; that stretch reads LEE. A helical membrane pass occupies residues 237-254; sequence VGLSMAMGAFLAGVLLAS. The Cytoplasmic portion of the chain corresponds to 255–269; sequence SEYRHALESDIEPFK. A helical membrane pass occupies residues 270–290; the sequence is GLLLGLFFIGVGMSIDFGTLV. Residues 291–293 are Periplasmic-facing; that stretch reads ENP. A helical membrane pass occupies residues 294 to 314; the sequence is LRILLLLAGFLAIKIVMLWLV. Over 315–326 the chain is Cytoplasmic; the sequence is ARTLGVPAKQRR. The helical transmembrane segment at 327–347 threads the bilayer; sequence WFAVLLGQGSEFAFVVFGAAQ. The Periplasmic portion of the chain corresponds to 348 to 358; sequence MADVLEPEWAK. A helical membrane pass occupies residues 359–379; the sequence is ALTLAVALSMAATPIFLVLLT. The Cytoplasmic segment spans residues 380–620; that stretch reads RMEKTATGEA…ADEPEVKPSI (241 aa). In terms of domain architecture, RCK N-terminal spans 399-518; the sequence is QPRVIVAGFG…AGVAMPERET (120 aa). The disordered stretch occupies residues 599 to 620; that stretch reads QGTAEGKHSGKAADEPEVKPSI. Over residues 603–620 the composition is skewed to basic and acidic residues; that stretch reads EGKHSGKAADEPEVKPSI.

Belongs to the monovalent cation:proton antiporter 2 (CPA2) transporter (TC 2.A.37) family. KefC subfamily. In terms of assembly, homodimer. Interacts with the regulatory subunit KefF.

The protein resides in the cell inner membrane. Its function is as follows. Pore-forming subunit of a potassium efflux system that confers protection against electrophiles. Catalyzes K(+)/H(+) antiport. The chain is Glutathione-regulated potassium-efflux system protein KefC from Salmonella typhi.